The sequence spans 628 residues: ATP-binding cassette sub-family F member 2 (628 aa).

Positions 1–57 (MPSDLAKKKAAKKKEAAKARQRPRKGHEENGDAVTEPQVAEEKIEEANGRETTGDGE) are disordered. The span at 40-53 (AEEKIEEANGRETT) shows a compositional bias: basic and acidic residues. 2 ABC transporter domains span residues 91-330 (VHII…ENQM) and 401-618 (IMVQ…VDEE). Residue 123–130 (GLNGIGKS) participates in ATP binding. Threonine 223 bears the Phosphothreonine mark. At lysine 309 the chain carries N6-acetyllysine. 435–442 (GPNGAGKS) lines the ATP pocket. Serine 517 carries the post-translational modification Phosphoserine.

This sequence belongs to the ABC transporter superfamily. ABCF family. EF3 subfamily.

The protein is ATP-binding cassette sub-family F member 2 of Mus musculus (Mouse).